We begin with the raw amino-acid sequence, 747 residues long: UPF0313 protein PA4928 (747 aa).

In terms of domain architecture, Radical SAM core spans 371–640; the sequence is AYEMIRFSVN…KSDQQRRLHK (270 aa). Cys-385, Cys-389, and Cys-392 together coordinate [4Fe-4S] cluster. The tract at residues 670-747 is disordered; sequence GKHHLVPTYQ…KKSRQPNIPR (78 aa).

The protein belongs to the UPF0313 family. Requires [4Fe-4S] cluster as cofactor.

In Pseudomonas aeruginosa (strain ATCC 15692 / DSM 22644 / CIP 104116 / JCM 14847 / LMG 12228 / 1C / PRS 101 / PAO1), this protein is UPF0313 protein PA4928.